The chain runs to 212 residues: uncharacterized protein (212 aa).

2 helical membrane passes run 54-74 (LCFA…GYAG) and 79-99 (WIIC…ALLL).

Its subcellular location is the cell membrane. This is an uncharacterized protein from Chlamydia pneumoniae (Chlamydophila pneumoniae).